The following is a 466-amino-acid chain: Muscarinic acetylcholine receptor M2 (466 aa).

Over 1–22 (MNNSTNSSNNGLAITSPYKTFE) the chain is Extracellular. N-linked (GlcNAc...) asparagine glycosylation is found at Asn2, Asn3, and Asn6. A helical transmembrane segment spans residues 23–45 (VVFIVLVAGSLSLVTIIGNILVM). Topologically, residues 46 to 59 (VSIKVNRHLQTVNN) are cytoplasmic. A helical transmembrane segment spans residues 60–80 (YFLFSLACADLIIGVFSMNLY). The Extracellular segment spans residues 81–97 (TLYTVIGYWPLGPVVCD). Cys96 and Cys176 are joined by a disulfide. A helical transmembrane segment spans residues 98 to 119 (LWLALDYVVSNASVMNLLIISF). Residues 120–122 (DRY) carry the Important for signaling motif. Topologically, residues 120–139 (DRYFCVTKPLTYPVKRTTKM) are cytoplasmic. The chain crosses the membrane as a helical span at residues 140 to 162 (AGMMIAAAWVLSFILWAPAILFW). Residues 163 to 184 (QFIVGVRTVEDGECYIQFFSNA) lie on the Extracellular side of the membrane. The chain crosses the membrane as a helical span at residues 185–209 (AVTFGTAIAAFYLPVIIMTVLYWHI). The Cytoplasmic segment spans residues 210–387 (SRASKSRIKK…PPSREKKVTR (178 aa)). Residues 218 to 320 (KKEKKEPVAN…SLGHSKDDNS (103 aa)) are disordered. The residue at position 232 (Ser232) is a Phosphoserine. The span at 254-270 (GLEHNKIQNGKAPRDGG) shows a compositional bias: basic and acidic residues. 2 stretches are compositionally biased toward polar residues: residues 284-293 (NDSTSVSAVA) and 304-313 (DENTVSTSLG). Residues 388-410 (TILAILLAFIITWAPYNVMVLIN) traverse the membrane as a helical segment. Over 411–418 (TFCAPCIP) the chain is Extracellular. A disulfide bridge connects residues Cys413 and Cys416. The chain crosses the membrane as a helical span at residues 419–442 (NTVWTIGYWLCYINSTINPACYAL). The Important for signaling signature appears at 436-440 (NPACY). Over 443–466 (CNATFKKTFKHLLMCHYKNIGATR) the chain is Cytoplasmic. Residues Thr446, Thr450, and Thr465 each carry the phosphothreonine modification.

Belongs to the G-protein coupled receptor 1 family. Muscarinic acetylcholine receptor subfamily. CHRM2 sub-subfamily. In terms of assembly, interacts with ARRB1 and ARRB2. Interacts with RACK1; the interaction regulates CHRM2 internalization. Phosphorylated in response to agonist treatment.

Its subcellular location is the cell membrane. It is found in the postsynaptic cell membrane. Its function is as follows. The muscarinic acetylcholine receptor mediates various cellular responses, including inhibition of adenylate cyclase, breakdown of phosphoinositides and modulation of potassium channels through the action of G proteins. Primary transducing effect is adenylate cyclase inhibition. Signaling promotes phospholipase C activity, leading to the release of inositol trisphosphate (IP3); this then triggers calcium ion release into the cytosol. This is Muscarinic acetylcholine receptor M2 (Chrm2) from Mus musculus (Mouse).